Consider the following 313-residue polypeptide: Aspartate carbamoyltransferase catalytic subunit (313 aa).

Positions 58 and 59 each coordinate carbamoyl phosphate. Lysine 86 contributes to the L-aspartate binding site. 3 residues coordinate carbamoyl phosphate: arginine 108, histidine 136, and glutamine 139. Positions 169 and 223 each coordinate L-aspartate. Carbamoyl phosphate-binding residues include glycine 265 and proline 266.

The protein belongs to the aspartate/ornithine carbamoyltransferase superfamily. ATCase family. As to quaternary structure, heterododecamer (2C3:3R2) of six catalytic PyrB chains organized as two trimers (C3), and six regulatory PyrI chains organized as three dimers (R2).

The enzyme catalyses carbamoyl phosphate + L-aspartate = N-carbamoyl-L-aspartate + phosphate + H(+). Its pathway is pyrimidine metabolism; UMP biosynthesis via de novo pathway; (S)-dihydroorotate from bicarbonate: step 2/3. Its function is as follows. Catalyzes the condensation of carbamoyl phosphate and aspartate to form carbamoyl aspartate and inorganic phosphate, the committed step in the de novo pyrimidine nucleotide biosynthesis pathway. In Anaeromyxobacter dehalogenans (strain 2CP-C), this protein is Aspartate carbamoyltransferase catalytic subunit.